A 244-amino-acid chain; its full sequence is Nuclear protein UL4 homolog (244 aa).

A disordered region spans residues 193–227 (RPDDQTTPTPTPHQYTSQRRQPETNCPSSPQPAFF). Positions 205–220 (HQYTSQRRQPETNCPS) are enriched in polar residues.

This sequence belongs to the alphaherpesvirinae HHV-1 UL4 family.

The protein localises to the host nucleus. The chain is Nuclear protein UL4 homolog from Varicella-zoster virus (strain Dumas) (HHV-3).